A 132-amino-acid polypeptide reads, in one-letter code: Small ribosomal subunit protein uS8 (132 aa).

It belongs to the universal ribosomal protein uS8 family. As to quaternary structure, part of the 30S ribosomal subunit. Contacts proteins S5 and S12.

One of the primary rRNA binding proteins, it binds directly to 16S rRNA central domain where it helps coordinate assembly of the platform of the 30S subunit. This Anaeromyxobacter dehalogenans (strain 2CP-1 / ATCC BAA-258) protein is Small ribosomal subunit protein uS8.